Consider the following 227-residue polypeptide: uncharacterized protein (227 aa).

5 consecutive transmembrane segments (helical) span residues A27–L47, P63–G83, T126–V146, V153–G173, and F186–A206.

It belongs to the DedA family.

It localises to the cell membrane. This is an uncharacterized protein from Mycobacterium tuberculosis (strain CDC 1551 / Oshkosh).